The primary structure comprises 219 residues: Cytidylate kinase (219 aa).

Residue 11-19 (GTAGSGKTA) participates in ATP binding.

It belongs to the cytidylate kinase family. Type 1 subfamily.

Its subcellular location is the cytoplasm. The enzyme catalyses CMP + ATP = CDP + ADP. The catalysed reaction is dCMP + ATP = dCDP + ADP. The sequence is that of Cytidylate kinase from Mesoplasma florum (strain ATCC 33453 / NBRC 100688 / NCTC 11704 / L1) (Acholeplasma florum).